Reading from the N-terminus, the 886-residue chain is General transcription factor 3C polypeptide 3 (886 aa).

The disordered stretch occupies residues 1 to 121; the sequence is MSGFSPELID…TPEQPTAGDV (121 aa). An N-acetylserine modification is found at S2. Residues 12 to 44 are compositionally biased toward basic and acidic residues; sequence LEGKISFEEFERRREERKTREKKSLQEKGKLSA. At S43 the chain carries Phosphoserine. Residues 53–63 are compositionally biased toward polar residues; it reads VPSSSGINSTK. A compositionally biased stretch (acidic residues) spans 92-113; that stretch reads ENEDDEEEEEEEEEEEEEEETP. TPR repeat units lie at residues 149-182, 183-216, 217-250, 252-284, 290-323, 326-361, 421-454, 456-489, 491-523, 733-766, and 811-844; these read LRGLMGEANIRFARGEREEAILMCMEIIRQAPLA, YEPFSTLAMIYEDQGDMEKSLQFELIAAHLNPSD, TEEWVRLAEMSLEQDNIKQAIFCYTKALKYEPTN, RYLWERSSLYEQMGDHKMAMDGYRRILNLLSPS, MQLARDMAKSYYEANDVTSAINIIDEAFSKHQGL, MEDVNIAAELYISNKQYDKALEIITDFSGIVLEKKT, GDLYLDVAEAFLDVGEYNSALPLLSALVCSERYN, AVVWLRHAECLKALGYMERAAESYGKVVDLAPLH, DARISLSTLQQQLGQPEKALEALEPMYDPDTLA, HALCVLNGHNAFVSGSFKHALGQYVQAFRTHPDE, and QESFYNLGRGLHQLGLIHLAIHYYQKALELPPLV. S282 carries the phosphoserine modification.

As to quaternary structure, part of the TFIIIC subcomplex TFIIIC2, consisting of six subunits, GTF3C1, GTF3C2, GTF3C3, GTF3C4, GTF3C5 and GTF3C6. Interacts with BRF1 and TBP.

It is found in the nucleus. Its function is as follows. Involved in RNA polymerase III-mediated transcription. Integral, tightly associated component of the DNA-binding TFIIIC2 subcomplex that directly binds tRNA and virus-associated RNA promoters. The sequence is that of General transcription factor 3C polypeptide 3 (GTF3C3) from Homo sapiens (Human).